Consider the following 670-residue polypeptide: Probable ATP-citrate synthase subunit 1 (670 aa).

Residues 1–22 (MPSATTASTNGANGASASPAPG) are disordered. Residues 257–277 (LLRY…EVGG) and 308–334 (FKTE…KNKS) each bind ATP. Glu-274 lines the Mg(2+) pocket. His-316 (tele-phosphohistidine intermediate) is an active-site residue. 335–345 (MREAGFYVPDT) is a binding site for CoA.

The protein belongs to the succinate/malate CoA ligase alpha subunit family. In terms of assembly, composed of two subunits.

The protein localises to the cytoplasm. The enzyme catalyses oxaloacetate + acetyl-CoA + ADP + phosphate = citrate + ATP + CoA. Catalyzes the formation of cytosolic acetyl-CoA, which is mainly used for the biosynthesis of fatty acids and sterols. This chain is Probable ATP-citrate synthase subunit 1, found in Neurospora crassa (strain ATCC 24698 / 74-OR23-1A / CBS 708.71 / DSM 1257 / FGSC 987).